A 419-amino-acid chain; its full sequence is N-acylglucosamine 2-epimerase (419 aa).

Positions Leu185 to Leu206 are leucine-zipper. Phosphoserine is present on Ser418.

This sequence belongs to the N-acylglucosamine 2-epimerase family. In terms of assembly, homodimer. Forms a heterodimer with renin and inhibits its activity.

The catalysed reaction is an N-acyl-D-glucosamine = an N-acyl-D-mannosamine. It participates in amino-sugar metabolism; N-acetylneuraminate degradation. In terms of biological role, catalyzes the interconversion of N-acetylglucosamine to N-acetylmannosamine. Involved in the N-glycolylneuraminic acid (Neu5Gc) degradation pathway. The sequence is that of N-acylglucosamine 2-epimerase (Renbp) from Mus musculus (Mouse).